Here is a 29-residue protein sequence, read N- to C-terminus: uncharacterized protein (29 aa).

The protein resides in the plastid. It is found in the chloroplast. This is an uncharacterized protein from Trieres chinensis (Marine centric diatom).